The chain runs to 512 residues: Glycerol-3-phosphate dehydrogenase (512 aa).

16–44 (DVAVVGGGINGVGIAADAAGRGLSVFLCE) contributes to the FAD binding site.

The protein belongs to the FAD-dependent glycerol-3-phosphate dehydrogenase family. FAD is required as a cofactor.

The protein localises to the cytoplasm. The enzyme catalyses a quinone + sn-glycerol 3-phosphate = dihydroxyacetone phosphate + a quinol. The polypeptide is Glycerol-3-phosphate dehydrogenase (glpD) (Pseudomonas aeruginosa (strain ATCC 15692 / DSM 22644 / CIP 104116 / JCM 14847 / LMG 12228 / 1C / PRS 101 / PAO1)).